Here is a 518-residue protein sequence, read N- to C-terminus: Cyclin-L2 (518 aa).

Cyclin-like regions lie at residues 81-183 (ELIQ…RVLK) and 196-280 (KIIV…KILQ). The segment at 310–518 (AKGLLPGTAP…DHPGHSRHRR (209 aa)) is disordered. 5 positions are modified to phosphoserine: S328, S335, S345, S348, and S366. Positions 382-420 (RSREQSYSRSPSRSASPKRRKSDSGSTSGGSKSQSRSRS) are RS. Over residues 405 to 427 (SGSTSGGSKSQSRSRSRSDSPPR) the composition is skewed to low complexity. The span at 438 to 450 (SEVRGSRKSKDCK) shows a compositional bias: basic and acidic residues. A compositionally biased stretch (basic residues) spans 455 to 469 (KPHKSRSRSSSRSRS). 2 stretches are compositionally biased toward basic and acidic residues: residues 470–479 (RSRERTDNSG) and 487–512 (YYRD…DHPG).

Belongs to the cyclin family. Cyclin L subfamily. As to quaternary structure, interacts with CDK11A, CDK11B, CDK12, CDK13 and POLR2A, the hyperphosphorylated C-terminal domain (CTD) of RNA polymerase II. May form a ternary complex with CDK11B and casein kinase II (CKII). Interacts with pre-mRNA-splicing factors, including at least SRSF1, SRSF2 and SRSF7/SLU7. As to expression, widely expressed (at protein level).

The protein localises to the nucleus speckle. The protein resides in the nucleus. It localises to the nucleoplasm. Its function is as follows. Involved in pre-mRNA splicing. May induce cell death, possibly by acting on the transcription and RNA processing of apoptosis-related factors. This Mus musculus (Mouse) protein is Cyclin-L2 (Ccnl2).